The following is a 253-amino-acid chain: N-acetylmuramoyl-L-alanine amidase CwlM (253 aa).

One can recognise a MurNAc-LAA domain in the interval 4–172; that stretch reads IFIDPGHGGS…IARGHANGLA (169 aa). The SPOR domain occupies 179–253; that stretch reads KNAAALYKVQ…AEFDTFIYQE (75 aa). Repeat copies occupy residues 184-219 and 220-253. The segment at 184–253 is 2 X 35 AA approximate tandem repeats; that stretch reads LYKVQIAAFR…AEFDTFIYQE (70 aa).

Belongs to the N-acetylmuramoyl-L-alanine amidase 3 family.

It localises to the secreted. It catalyses the reaction Hydrolyzes the link between N-acetylmuramoyl residues and L-amino acid residues in certain cell-wall glycopeptides.. In terms of biological role, hydrolyzes the cell wall of M.luteus more efficiently than that of B.licheniformis and B.subtilis. The C-terminal region, including the repeats, determines substrate specificity. The sequence is that of N-acetylmuramoyl-L-alanine amidase CwlM (cwlM) from Bacillus licheniformis.